A 123-amino-acid polypeptide reads, in one-letter code: Large ribosomal subunit protein bL21 (123 aa).

It belongs to the bacterial ribosomal protein bL21 family. As to quaternary structure, part of the 50S ribosomal subunit. Contacts protein L20.

Functionally, this protein binds to 23S rRNA in the presence of protein L20. The chain is Large ribosomal subunit protein bL21 from Sinorhizobium fredii (strain NBRC 101917 / NGR234).